A 447-amino-acid chain; its full sequence is BAG family molecular chaperone regulator 5 (447 aa).

BAG domains lie at 9 to 86 (SISR…EQNA), 95 to 167 (QNIF…ENCM), 182 to 260 (SVAK…DLEE), 275 to 350 (SILK…DLKE), and 365 to 442 (SHKA…DLKS).

As to quaternary structure, binds to the ATPase domain of HSP/HSP70 chaperones. Binds PRKN. Interacts complex with HSPA8 and JPH2.

Its function is as follows. Co-chaperone for HSP/HSP70 proteins. It functions as a nucleotide-exchange factor promoting the release of ADP from HSP70, thereby activating Hsp70-mediated protein refolding. Has an essential role in maintaining proteostasis at junctional membrane complexes (JMC), where it may function as a scaffold between the HSPA8 chaperone and JMC proteins enabling correct, HSPA8-dependent JMC protein folding. Inhibits both auto-ubiquitination of PRKN and ubiquitination of target proteins by PRKN. This chain is BAG family molecular chaperone regulator 5 (BAG5), found in Bos taurus (Bovine).